Here is a 215-residue protein sequence, read N- to C-terminus: C-type lectin domain family 4 member D (215 aa).

The Cytoplasmic segment spans residues 1-17; that stretch reads MGLEKPQSKLEGGMHPQ. The chain crosses the membrane as a helical; Signal-anchor for type II membrane protein span at residues 18–38; sequence LIPSVIAVVFILLLSVCFIAS. The Extracellular segment spans residues 39 to 215; it reads CLVTHHNFSR…ICKIPGTTLN (177 aa). Asparagine 45 is a glycosylation site (N-linked (GlcNAc...) asparagine). A disulfide bond links cysteine 84 and cysteine 95. The C-type lectin domain occupies 91-208; the sequence is FQSNCYFPLT…CNFEASRICK (118 aa). Residues asparagine 102 and asparagine 111 are each glycosylated (N-linked (GlcNAc...) asparagine). 2 cysteine pairs are disulfide-bonded: cysteine 112-cysteine 207 and cysteine 182-cysteine 199. Positions 173, 175, 195, and 196 each coordinate Ca(2+).

In terms of assembly, heterodimer with CLEC4E; disulfide-linked. CLEC4E acts as a bridge for interaction between CLEC4D and FCER1G to form a functional complex. Heterodimer with CLEC6A; this heterodimer forms a pattern recognition receptor (PRR) against fungal infection. Expressed weakly in peripheral blood leukocytes, bone marrow and spleen. Expression is confined mostly in monocytes and macrophage and seems to be up-regulated by IL-6, IL-10, TNF-alpha and IFN-gamma.

The protein localises to the cell membrane. Its function is as follows. Calcium-dependent lectin that acts as a pattern recognition receptor (PRR) of the innate immune system: recognizes damage-associated molecular patterns (DAMPs) of pathogen-associated molecular patterns (PAMPs) of bacteria and fungi. The PAMPs include alpha-mannans on C.albicans hypheas and mycobacterial trehalose 6,6'-dimycolate (TDM). Interacts with signaling adapter Fc receptor gamma chain/FCER1G, likely via CLEC4E, to form a functional complex in myeloid cells. Binding of mycobacterial TDM or C.albicans alpha-mannans to this receptor complex leads to phosphorylation of the immunoreceptor tyrosine-based activation motif (ITAM) of FCER1G, triggering activation of SYK, CARD9 and NF-kappa-B, consequently driving maturation of antigen-presenting cells and shaping antigen-specific priming of T-cells toward effector T-helper 1 and T-helper 17 cell subtypes. The heterodimer formed with CLEC6A is active against fungal infection. Functions as an endocytic receptor. May be involved in antigen uptake at the site of infection, either for clearance of the antigen, or for processing and further presentation to T-cells. In Homo sapiens (Human), this protein is C-type lectin domain family 4 member D.